The following is a 612-amino-acid chain: DNA damage checkpoint protein 1 (612 aa).

Ser-436 is subject to Phosphoserine. Residues 576-612 are disordered; that stretch reads GLLNSQNDTSNHKKQDNKEMEDGLGLTQVEKPRGIFD. Basic and acidic residues predominate over residues 585–596; that stretch reads SNHKKQDNKEME.

It belongs to the DDC1 family. Component of the checkpoint clamp complex composed of DDC1, MEC3 and RAD17. The interaction with MEC3 is performed in a RAD17-dependent manner. The checkpoint clamp complex loads onto DNA in an ATP-dependent manner through its interaction with the RFC-RAD4 checkpoint clamp loader complex. Interacts with the DNA polymerase zeta subunit REV7 and DPB11. Post-translationally, phosphorylated during cell cycle S-phase and in response to DNA damage. This phosphorylation is MEC14 dependent. Also hosphorylated by CDC28.

It localises to the cytoplasm. The protein resides in the nucleus. Component of the checkpoint clamp complex involved in the surveillance mechanism that allows the DNA repair pathways to act to restore the integrity of the DNA prior to DNA synthesis or separation of the replicated chromosomes. Associates with sites of DNA damage and modulates the MEC1 signaling pathway and the activation of RAD53 in response to DNA damage at phase G1. The complex also physically regulates DNA polymerase zeta-dependent mutagenesis by controlling the access of polymerase zeta to damaged DNA. The protein is DNA damage checkpoint protein 1 (DDC1) of Saccharomyces cerevisiae (strain ATCC 204508 / S288c) (Baker's yeast).